A 134-amino-acid chain; its full sequence is UPF0299 membrane protein KPK_1586 (134 aa).

Transmembrane regions (helical) follow at residues 5 to 25 (LTII…LYAG), 26 to 46 (IFIA…MLIL), 66 to 86 (ILIR…MQYW), and 93 to 113 (LGPV…VVSW).

This sequence belongs to the UPF0299 family.

The protein resides in the cell inner membrane. In Klebsiella pneumoniae (strain 342), this protein is UPF0299 membrane protein KPK_1586.